Consider the following 920-residue polypeptide: MDWSQTLNLPKTDFPMRANLAQREPQFLKFWQENDIFKKMLEKNKNNKKFILHDGPPYANGDIHLGHALNKVLKDIVNKYKSLQGYYTPYIPGWDTHGLPIEQQVIKKLEVNRHEVDPVEFRKKCKEFALSYIDIQRQQFKRLGVFGEWENPYMTLDPKFEARQIRVFGEMAKKGYIYKGLKPVYWCPSCETALAEAEIEYQEDRTYSIYVKFEVIDDKGLFSNLPIGDKKVYIVIWTTTTWTLPGNLAIALNADFDYSLIDIGNEILVVASELVERVMKTNKIEQYKEIARFKGKDLEYVKCKHPFLDRTSLVILGEHVTLEAGTGCVHTAPGHGEEDFEVCQRYNIHVIVPVDNKGYLTKEAGKFAGLFYEDSNKEIAKELEASGHLLGVEKITHQYPHCWRCKNPVIFRATEQWFASVKGFRDQALKAVDDVKWVPEWGRDRIYNMIVDRQDWCISRQRIWGVPIPIFYCKNCRKELITDETIDYIAKIFEKEGSDAWFSKDVKELLPEGVKCPVCGCSEFEKETDIMDVWFDSGSSHAYVLESREDLEWPCDMYLEGNDQYRGWFQSSLLTAVATKGRAPYRIVLTHGFVVDGEGKKMSKSEGNVISPFDIINEFGADILRLWCVSADYTTDMRISKDIIKQLTEIYRKIRNTARFLLGNLYDFNPKTDKVGYENLKEIDKWALQRLYKLIEKVTKAYEEYDYNQVYHLVHNFCVIDMSNLYLDINKDRLYASKSESLDRRSAQTVMYEILIALTILIAPILSFTAEEIWQNIIFKEEDAESVFLTRWPSINEDILRDEALREKWDKIIEIKDIVSKQLEIARNEKLIGSSLDSKVKIFAKCDIKRFIEENKDIIQEVLIVSQLDVEESDSDQIKVEVYKADGSKCERCWKFDTMVGKNEESLNVCPRCYEVVKSK.

The 'HIGH' region motif lies at 57-67 (PYANGDIHLGH). Glu560 is an L-isoleucyl-5'-AMP binding site. The 'KMSKS' region signature appears at 601 to 605 (KMSKS). Lys604 contributes to the ATP binding site. Zn(2+) contacts are provided by Cys890, Cys893, Cys910, and Cys913.

Belongs to the class-I aminoacyl-tRNA synthetase family. IleS type 1 subfamily. As to quaternary structure, monomer. Requires Zn(2+) as cofactor.

It is found in the cytoplasm. It carries out the reaction tRNA(Ile) + L-isoleucine + ATP = L-isoleucyl-tRNA(Ile) + AMP + diphosphate. Functionally, catalyzes the attachment of isoleucine to tRNA(Ile). As IleRS can inadvertently accommodate and process structurally similar amino acids such as valine, to avoid such errors it has two additional distinct tRNA(Ile)-dependent editing activities. One activity is designated as 'pretransfer' editing and involves the hydrolysis of activated Val-AMP. The other activity is designated 'posttransfer' editing and involves deacylation of mischarged Val-tRNA(Ile). The chain is Isoleucine--tRNA ligase from Caldicellulosiruptor bescii (strain ATCC BAA-1888 / DSM 6725 / KCTC 15123 / Z-1320) (Anaerocellum thermophilum).